A 692-amino-acid chain; its full sequence is MGTLQSWRRAYGALKDTTKVGLVRVNSDYAELDVAIVKATNHVECPPKDRHLRKIFLATSAIRPRADVAYCIHALSRRLHKTRNWTVALKALLVIHRLLRDGDPTFREELLNFSQKGRIMQISNFKDDSSPVAWDCSGWVRTYALFLEERLECFRVLKYDIEAERLPKVSPGQEKGYSKTRDLDGEKLLEQLPALQQLLHRLIGCKPEGAAKHNHIIQYALSLVLKESFKVYCAINEGIINLVEKFFEMPRHEAIKALEIYKRAGLQAGNLSAFYEVCKGLELARNFQFPVLREPPQSFLTTMEEYMRDAPQMVDVTSGPLLLTYTPDDGLTSEDVGPSHEEHETSSPSDSAVVPSEETQLSSQSPPSVETPQNFIDTDDLLGLHDDTPDPLAILDQNALALALVSNDVDSSPFSFGQARDLDPSGWELALVTTPSNDISAATERQLAGGLDTLTLNSLYDDGALRAAQQPAYGVPASNPFEVQDLFAFSDSVSPPSAVNNPFGLYEPTYHQQEQQPQLQVAPSPANPFGDFGEFPIVPVSEPQSTTSFGAFPVPVSEPSNTTGFGEIPVVPVTEPPNTTAFGEFPVVPVSEPQNITGFGALPVTPASEPSNTTGFGEFPVVSVSAPQNTTGFGALPVIPVSEPSKTTGLGEFPVVPVSEPQNTTGFGEFPVNAGAHEQHNSNNPFGSTGFL.

One can recognise an ENTH domain in the interval 24 to 161 (RVNSDYAELD…ECFRVLKYDI (138 aa)). The disordered stretch occupies residues 325–383 (YTPDDGLTSEDVGPSHEEHETSSPSDSAVVPSEETQLSSQSPPSVETPQNFIDTDDLLG). The span at 357-376 (EETQLSSQSPPSVETPQNFI) shows a compositional bias: polar residues. Ser363 carries the post-translational modification Phosphoserine. Residues 532–548 (FGEFPIVPVSEPQSTTS) form repeat 1. The interval 532-666 (FGEFPIVPVS…PVSEPQNTTG (135 aa)) is 8 X 17 AA approximate tandem repeats. The 2; truncated repeat unit spans residues 549–564 (FGAFPVPVSEPSNTTG). 6 tandem repeats follow at residues 565–581 (FGEI…NTTA), 582–598 (FGEF…NITG), 599–615 (FGAL…NTTG), 616–632 (FGEF…NTTG), 633–649 (FGAL…KTTG), and 650–666 (LGEF…NTTG).

As to expression, expressed in the whole plant.

It is found in the membrane. It localises to the clathrin-coated pit. Its subcellular location is the golgi apparatus. The protein localises to the cytoplasmic vesicle. The protein resides in the clathrin-coated vesicle. This Arabidopsis thaliana (Mouse-ear cress) protein is Putative clathrin assembly protein At1g14910.